Here is a 439-residue protein sequence, read N- to C-terminus: Glutamate--tRNA ligase 1 (439 aa).

The short motif at 6 to 16 (PSPTGDMHIGN) is the 'HIGH' region element. Positions 232 to 236 (KMSKR) match the 'KMSKS' region motif. ATP is bound at residue lysine 235.

This sequence belongs to the class-I aminoacyl-tRNA synthetase family. Glutamate--tRNA ligase type 1 subfamily. Monomer.

It is found in the cytoplasm. It carries out the reaction tRNA(Glu) + L-glutamate + ATP = L-glutamyl-tRNA(Glu) + AMP + diphosphate. Functionally, catalyzes the attachment of glutamate to tRNA(Glu) in a two-step reaction: glutamate is first activated by ATP to form Glu-AMP and then transferred to the acceptor end of tRNA(Glu). The chain is Glutamate--tRNA ligase 1 from Helicobacter acinonychis (strain Sheeba).